Consider the following 122-residue polypeptide: Large ribosomal subunit protein uL14 (122 aa).

This sequence belongs to the universal ribosomal protein uL14 family. In terms of assembly, part of the 50S ribosomal subunit. Forms a cluster with proteins L3 and L19. In the 70S ribosome, L14 and L19 interact and together make contacts with the 16S rRNA in bridges B5 and B8.

Binds to 23S rRNA. Forms part of two intersubunit bridges in the 70S ribosome. The polypeptide is Large ribosomal subunit protein uL14 (Streptococcus equi subsp. equi (strain 4047)).